We begin with the raw amino-acid sequence, 175 residues long: Small ribosomal subunit protein uS5 (175 aa).

A disordered region spans residues 1–21 (MAKPERNKKPQQAEERDDGMR). Residues 20 to 83 (MREKMVAVNR…EEARRKMAKV (64 aa)) enclose the S5 DRBM domain.

Belongs to the universal ribosomal protein uS5 family. Part of the 30S ribosomal subunit. Contacts proteins S4 and S8.

With S4 and S12 plays an important role in translational accuracy. In terms of biological role, located at the back of the 30S subunit body where it stabilizes the conformation of the head with respect to the body. In Dechloromonas aromatica (strain RCB), this protein is Small ribosomal subunit protein uS5.